Reading from the N-terminus, the 451-residue chain is Trigger factor (451 aa).

A PPIase FKBP-type domain is found at 165–250 (DDKLTIDFEG…LHQIQAREML (86 aa)).

The protein belongs to the FKBP-type PPIase family. Tig subfamily.

The protein localises to the cytoplasm. The enzyme catalyses [protein]-peptidylproline (omega=180) = [protein]-peptidylproline (omega=0). In terms of biological role, involved in protein export. Acts as a chaperone by maintaining the newly synthesized protein in an open conformation. Functions as a peptidyl-prolyl cis-trans isomerase. This Helicobacter pylori (strain ATCC 700392 / 26695) (Campylobacter pylori) protein is Trigger factor (tig).